A 325-amino-acid chain; its full sequence is Mitochondrial thiamine pyrophosphate carrier 1 (325 aa).

Solcar repeat units lie at residues 12–111 (GSRL…TTLL), 122–209 (PPSA…LRPH), and 216–312 (PFSS…ALKF). Helical transmembrane passes span 17-35 (VTAA…IAPL), 92-108 (LLYV…YRTT), 127-143 (SFVA…AATY), 184-200 (VWDR…SFFF), 223-239 (VART…TFPL), and 287-304 (GLTV…VTMW).

It belongs to the mitochondrial carrier (TC 2.A.29) family.

Its subcellular location is the mitochondrion inner membrane. In terms of biological role, mitochondrial transporter that mediates uptake of thiamine pyrophosphate (ThPP) into mitochondria. The chain is Mitochondrial thiamine pyrophosphate carrier 1 (TPC1) from Chaetomium globosum (strain ATCC 6205 / CBS 148.51 / DSM 1962 / NBRC 6347 / NRRL 1970) (Soil fungus).